Here is a 59-residue protein sequence, read N- to C-terminus: Large ribosomal subunit protein bL32 (59 aa).

The tract at residues 1–59 is disordered; that stretch reads MAVQQNRKTRSKRGMRRSHDALSAAALSTDATTGEVHRRHHVSPDGFYRGKQVVEARDE. Residues 7–16 are compositionally biased toward basic residues; the sequence is RKTRSKRGMR. Positions 21–33 are enriched in low complexity; the sequence is ALSAAALSTDATT.

This sequence belongs to the bacterial ribosomal protein bL32 family.

This Marinobacter nauticus (strain ATCC 700491 / DSM 11845 / VT8) (Marinobacter aquaeolei) protein is Large ribosomal subunit protein bL32.